Reading from the N-terminus, the 121-residue chain is Large ribosomal subunit protein bL12 (121 aa).

It belongs to the bacterial ribosomal protein bL12 family. As to quaternary structure, homodimer. Part of the ribosomal stalk of the 50S ribosomal subunit. Forms a multimeric L10(L12)X complex, where L10 forms an elongated spine to which 2 to 4 L12 dimers bind in a sequential fashion. Binds GTP-bound translation factors.

Functionally, forms part of the ribosomal stalk which helps the ribosome interact with GTP-bound translation factors. Is thus essential for accurate translation. The sequence is that of Large ribosomal subunit protein bL12 from Baumannia cicadellinicola subsp. Homalodisca coagulata.